We begin with the raw amino-acid sequence, 1006 residues long: GATA zinc finger domain-containing protein 7 (1006 aa).

Positions Ser55–Ser70 are enriched in low complexity. Disordered regions lie at residues Ser55–Leu116, Pro128–Tyr248, Asn381–Thr499, Ser528–Ser638, and Tyr657–Asp800. A compositionally biased stretch (polar residues) spans Asp71–Ile86. Low complexity-rich tracts occupy residues Ser87–Ser110 and Pro128–Ser158. A compositionally biased stretch (polar residues) spans Pro159–Pro168. Residues Asn169 to Ser180 show a composition bias toward low complexity. Over residues Ile181–Ser190 the composition is skewed to polar residues. Composition is skewed to low complexity over residues Asn205–Asn241 and Thr388–Asn410. Residues Ile411–Thr426 show a composition bias toward polar residues. Composition is skewed to low complexity over residues Pro427–Gln456 and Ser468–Pro496. A compositionally biased stretch (polar residues) spans Ser528–Tyr539. Positions Thr540–Pro557 are enriched in low complexity. Positions Leu558 to Gly589 are enriched in polar residues. 2 stretches are compositionally biased toward low complexity: residues Asn590–Asn601 and Ser619–Ser638. Over residues Gly662–Tyr680 the composition is skewed to polar residues. Low complexity-rich tracts occupy residues Asn681–Asn706 and Ser713–Asn785. The segment at Cys842–Cys867 adopts a GATA-type zinc-finger fold. The tract at residues Asn925–Ile957 is disordered. Positions Ser928–Ser954 are enriched in low complexity.

In Dictyostelium discoideum (Social amoeba), this protein is GATA zinc finger domain-containing protein 7 (gtaG).